We begin with the raw amino-acid sequence, 893 residues long: DNA endonuclease RBBP8 (893 aa).

The interval glutamate 22–leucine 45 is essential for binding to the MRN complex and for RPA focus formation on DNA damage. Positions valine 35–leucine 84 form a coiled coil. Positions leucine 45 to isoleucine 160 are required for interaction with LMO4, probably by stabilizing the interaction through RPPB8 dimerization. Residues lysine 62 and lysine 115 each participate in a glycyl lysine isopeptide (Lys-Gly) (interchain with G-Cter in SUMO2) cross-link. Residues isoleucine 117–leucine 138 adopt a coiled-coil conformation. Lysine 193 is covalently cross-linked (Glycyl lysine isopeptide (Lys-Gly) (interchain with G-Cter in SUMO2)). 2 positions are modified to phosphoserine: serine 233 and serine 276. Positions methionine 296–arginine 307 are enriched in basic and acidic residues. The tract at residues methionine 296 to alanine 324 is disordered. Polar residues predominate over residues phenylalanine 308–alanine 324. Threonine 315 carries the phosphothreonine modification. A phosphoserine mark is found at serine 325, serine 326, and serine 348. Glycyl lysine isopeptide (Lys-Gly) (interchain with G-Cter in SUMO2) cross-links involve residues lysine 359 and lysine 377. At serine 378 the chain carries Phosphoserine. Residues lysine 394, lysine 403, lysine 409, and lysine 437 each participate in a glycyl lysine isopeptide (Lys-Gly) (interchain with G-Cter in SUMO2) cross-link. A PXDLS motif motif is present at residues proline 489 to serine 493. Residues asparagine 508–proline 556 are damage-recruitment motif. Lysine 525 participates in a covalent cross-link: Glycyl lysine isopeptide (Lys-Gly) (interchain with G-Cter in SUMO2); alternate. Glycyl lysine isopeptide (Lys-Gly) (interchain with G-Cter in SUMO2) cross-links involve residues lysine 529, lysine 570, and lysine 576. Lysine 602 is covalently cross-linked (Glycyl lysine isopeptide (Lys-Gly) (interchain with G-Cter in SUMO2); alternate). Glycyl lysine isopeptide (Lys-Gly) (interchain with G-Cter in SUMO2) cross-links involve residues lysine 611, lysine 636, and lysine 638. Positions alanine 639–glycine 683 are required for interaction with LMO4, probably by making physical contact with LMO4. Serine 662 carries the phosphoserine; by ATM modification. Lysine 674 is covalently cross-linked (Glycyl lysine isopeptide (Lys-Gly) (interchain with G-Cter in SUMO2)). The residue at position 677 (serine 677) is a Phosphoserine. Lysine 716 participates in a covalent cross-link: Glycyl lysine isopeptide (Lys-Gly) (interchain with G-Cter in SUMO2). Serine 720 bears the Phosphoserine mark. Phosphoserine; by ATM is present on serine 742. Residue lysine 778 forms a Glycyl lysine isopeptide (Lys-Gly) (interchain with G-Cter in SUMO2) linkage. Residues phenylalanine 836 to tyrosine 838 carry the KLHL15-binding motif. Threonine 843 and threonine 855 each carry phosphothreonine. Lysine 865 participates in a covalent cross-link: Glycyl lysine isopeptide (Lys-Gly) (interchain with G-Cter in SUMO2). Residues aspartate 869–threonine 893 form a disordered region.

Belongs to the COM1/SAE2/CtIP family. Homotetramer; formed by antiparallel association of helical extensions protruding from the N-termini of two parallel coiled-coil dimers. Forms a dumbbell-shaped particle in which polar globular domains are held about 30 nm apart by a central rod. Homotetramerization is required for DNA-end resection and repair. Interacts (via the PXDLS motif) with CTBP1; the interaction is disrupted via binding of the adenovirus E1A to CTBP1. Component of the BRCA1-RBBP8 complex. Interacts (the Ser-326 phosphorylated form) with BRCA1 (via the C-terminal BRCT domains): the interaction occurs in the G2 phase, ubiquitinates RBBP8 and involves RBBP8 in BRCA1-dependent G2/M checkpoint control on DNA damage. Interacts with RB1. Interacts with the MRN complex. Interacts directly with MRE11; the interaction is required for efficient homologous recombination (HR) and regulation of the MRN complex. Interacts (when phosphorylated by CDK1) with NBN; promoting association with the MRN complex. Interacts with LMO4 (via the LIM zinc-binding 1 domain). Interacts with SIAH1. Interacts with RNF138. Interacts with EXD2. Interacts with CUL3 and KLHL15; this interaction leads to RBBP8 proteasomal degradation. Directly interacts with PIN1; this interaction depends upon RBBP8 phosphorylation, predominantly at Thr-315. Interacts with FZR1; this interaction leads to APC/C-mediated RBBP8 proteasomal degradation. Interacts with AUNIP; leading to recruit RBBP8 to sites of DNA damage. Interacts with SAMHD1. Interacts with HDGFL2. Post-translationally, hyperphosphorylation upon ionizing radiation results in dissociation from BRCA1. Phosphorylation at Thr-843 by CDK1 is essential for the recruitment to DNA and the DNA repair function. Phosphorylation at Thr-843 and Thr-855 promote interaction with NBN and recruitment to double-strand breaks (DSBs). Phosphorylated on Ser-326 as cells enter G2 phase. Phosphorylated at Ser-326 as cells enter G2 phase. This phosphorylation is required for binding BRCA1 and for the G2/M DNA damage transition checkpoint control. Phosphorylation at Thr-315 is required for PIN1-binding, while phosphorylation at Ser-276 serves as a PIN1 isomerization site. Phosphorylation at Thr-315 is cell-cycle dependent. It steadily increases during S phase, peaks at late S/G2 phase, and drops at G1. Phosphorylation is not required for tetramerization. Binds to DNA more strongly when dephosphorylated. In terms of processing, ubiquitinated. Ubiquitination at multiple sites by BRCA1 (via its N-terminal RING domain) does not lead to its proteasomal degradation but instead the ubiquitinated RBBP8 binds to chromatin following DNA damage and may play a role in G2/M checkpoint control. Ubiquitinated by RNF138 at its N-terminus. Ubiquitinated through 'Lys-48' by the E3 CUL3-KLHL15 complex; this modification leads to proteasomal degradation. Ubiquitinated by the E3 FZR1/APC/C complex; this modification leads to proteasomal degradation.

Its subcellular location is the nucleus. It is found in the chromosome. Its function is as follows. Endonuclease that cooperates with the MRE11-RAD50-NBN (MRN) complex in DNA-end resection, the first step of double-strand break (DSB) repair through the homologous recombination (HR) pathway. HR is restricted to S and G2 phases of the cell cycle and preferentially repairs DSBs resulting from replication fork collapse. Key determinant of DSB repair pathway choice, as it commits cells to HR by preventing classical non-homologous end-joining (NHEJ). Specifically promotes the endonuclease activity of the MRN complex to clear DNA ends containing protein adducts: recruited to DSBs by NBN following phosphorylation by CDK1, and promotes the endonuclease activity of MRE11 to clear protein-DNA adducts and generate clean double-strand break ends. Functions downstream of the MRN complex and ATM, promotes ATR activation and its recruitment to DSBs in the S/G2 phase facilitating the generation of ssDNA. Component of the BRCA1-RBBP8 complex that regulates CHEK1 activation and controls cell cycle G2/M checkpoints on DNA damage. During immunoglobulin heavy chain class-switch recombination, promotes microhomology-mediated alternative end joining (A-NHEJ) and plays an essential role in chromosomal translocations. Binds preferentially to DNA Y-junctions and to DNA substrates with blocked ends and promotes intermolecular DNA bridging. This is DNA endonuclease RBBP8 (Rbbp8) from Mus musculus (Mouse).